Here is a 66-residue protein sequence, read N- to C-terminus: Large ribosomal subunit protein bL35 (66 aa).

A compositionally biased stretch (polar residues) spans 18–27; it reads ATGKIKSTQS. The interval 18-41 is disordered; that stretch reads ATGKIKSTQSAKRHGMTKRSKRSI. The segment covering 28-41 has biased composition (basic residues); the sequence is AKRHGMTKRSKRSI.

It belongs to the bacterial ribosomal protein bL35 family.

This is Large ribosomal subunit protein bL35 from Ehrlichia ruminantium (strain Gardel).